We begin with the raw amino-acid sequence, 117 residues long: Large ribosomal subunit protein bL20 (117 aa).

Belongs to the bacterial ribosomal protein bL20 family.

Functionally, binds directly to 23S ribosomal RNA and is necessary for the in vitro assembly process of the 50S ribosomal subunit. It is not involved in the protein synthesizing functions of that subunit. This is Large ribosomal subunit protein bL20 from Leptospira biflexa serovar Patoc (strain Patoc 1 / Ames).